A 452-amino-acid polypeptide reads, in one-letter code: Disintegrin and metalloproteinase domain-containing protein 11 (452 aa).

Residues 1-120 (RRHHSPLLVS…GGGSCLFNKP (120 aa)) enclose the Peptidase M12B domain. Over 1–417 (RRHHSPLLVS…EKYKGPSGTN (417 aa)) the chain is Extracellular. Disulfide bonds link Cys31/Cys115, Cys74/Cys99, and Cys76/Cys83. In terms of domain architecture, Disintegrin spans 126–214 (PPSCGNGFIE…ACPANLHKQD (89 aa)). Asn149 carries N-linked (GlcNAc...) asparagine glycosylation. Cys186 and Cys206 form a disulfide bridge. N-linked (GlcNAc...) asparagine glycosylation is found at Asn288 and Asn356. Intrachain disulfides connect Cys360-Cys375, Cys369-Cys381, and Cys383-Cys392. The EGF-like domain maps to 360 to 416 (CPGSWNGVICSDHGVCSNEGKCICHPEWTGKDCSVYDPLPVPKPTGVVEKYKGPSGT). Residues 418 to 438 (IIIGSIAGAVLIAAIVLGGTG) traverse the membrane as a helical segment. The Cytoplasmic portion of the chain corresponds to 439–452 (WGFKNIRRGRSGGG).

The precursor is cleaved by a furin endopeptidase. In terms of tissue distribution, detected in testis and barely expressed in heart and muscle. Not detectable in liver.

It localises to the presynaptic cell membrane. The protein localises to the perikaryon. It is found in the cell projection. The protein resides in the axon. Probable ligand for integrin in the brain. This is a non-catalytic metalloprotease-like protein. The chain is Disintegrin and metalloproteinase domain-containing protein 11 (adam11) from Xenopus laevis (African clawed frog).